A 478-amino-acid chain; its full sequence is MFQPLLDAYVESASIEKMASKSPPPLKIAVANWWGDEEIKEFKNSVLYFILSQRYTITLHQNPNEFSDLVFGNPLGSARKILSYQNAKRVFYTGENESPNFNLFDYAIGFDELDFNDRYLRMPLYYDRLHHKAESVNDTTAPYKLKDNSLYALKKPSHCFKEKHPNLCAVVNDESDPLKRGFASFVASNPNAPIRNAFYDALNSIEPVTGGGSVRNTLGYNVKNKNEFLSQYKFNLCFENTQGYGYVTEKIIDAYFSHTIPIYWGSPSVAKDFNPKSFVNVHDFKNFDEAIDYIKYLHTHKNAYLDMLYENPLNTLDGKAYFYQNLSFKKILAFFKTILENDTIYHDNPFIFCRDLNEPLVTIDDLRVNYDDLRVNYDDLRINYDDLRVNYDDLRINYDDLRVNYDDLRVNYDDLRINYDDLRVNYDDLRVNYERLLSKATPLLELSQNTTSKIYRKAYQKSLPLLRAIRRWVKKLGL.

Substrate contacts are provided by residues glycine 94, 186–189 (VASN), arginine 195, 222–225 (VKNK), asparagine 240, and 246–250 (YVTEK). An important for acceptor specificity region spans residues 347-353 (DNPFIFC). Tandem repeats lie at residues 364–370 (DDLRVNY), 371–377 (DDLRVNY), 378–384 (DDLRINY), 385–391 (DDLRVNY), 392–398 (DDLRINY), 399–405 (DDLRVNY), 406–412 (DDLRVNY), 413–419 (DDLRINY), 420–426 (DDLRVNY), and 427–433 (DDLRVNY). Residues 364–433 (DDLRVNYDDL…VNYDDLRVNY (70 aa)) are 10 X 7 AA tandem repeat of D-D-L-R-[IV]-N-Y. The interval 434–478 (ERLLSKATPLLELSQNTTSKIYRKAYQKSLPLLRAIRRWVKKLGL) is may be involved in membrane binding.

It belongs to the glycosyltransferase 10 family. As to quaternary structure, homodimer.

It localises to the membrane. The protein localises to the cytoplasm. It carries out the reaction a beta-D-galactosyl-(1-&gt;4)-N-acetyl-beta-D-glucosaminyl derivative + GDP-beta-L-fucose = a beta-D-galactosyl-(1-&gt;4)-[alpha-L-fucosyl-(1-&gt;3)]-N-acetyl-beta-D-glucosaminyl derivative + GDP + H(+). The protein operates within lipopolysaccharide biosynthesis; LPS oligosaccharide biosynthesis. Functionally, involved in the biosynthesis of the Lewis X (LeX) trisaccharide of the lipopolysaccharide (LPS) O-antigen. Catalyzes the addition of fucose in alpha 1-3 linkage to Gal-beta-1-4-GlcNAc-beta-O-R (LacNAc-R) type II acceptor. This chain is Alpha-(1,3)-fucosyltransferase FucT, found in Helicobacter pylori (Campylobacter pylori).